A 207-amino-acid chain; its full sequence is Ion-translocating oxidoreductase complex subunit G (207 aa).

The helical transmembrane segment at 11–31 (GILLGFIALLCTIISAGIYFL) threads the bilayer. T175 is modified (FMN phosphoryl threonine).

The protein belongs to the RnfG family. As to quaternary structure, the complex is composed of six subunits: RnfA, RnfB, RnfC, RnfD, RnfE and RnfG. Requires FMN as cofactor.

It localises to the cell inner membrane. Its function is as follows. Part of a membrane-bound complex that couples electron transfer with translocation of ions across the membrane. The protein is Ion-translocating oxidoreductase complex subunit G of Haemophilus influenzae (strain PittEE).